A 262-amino-acid chain; its full sequence is GTP cyclohydrolase FolE2 (262 aa).

The protein belongs to the GTP cyclohydrolase IV family.

The enzyme catalyses GTP + H2O = 7,8-dihydroneopterin 3'-triphosphate + formate + H(+). It functions in the pathway cofactor biosynthesis; 7,8-dihydroneopterin triphosphate biosynthesis; 7,8-dihydroneopterin triphosphate from GTP: step 1/1. In terms of biological role, converts GTP to 7,8-dihydroneopterin triphosphate. The sequence is that of GTP cyclohydrolase FolE2 from Dichelobacter nodosus (strain VCS1703A).